An 83-amino-acid polypeptide reads, in one-letter code: Protein L83L (83 aa).

The segment at methionine 1–proline 26 is disordered.

It belongs to the asfivirus L83L family. Interacts with host IL1B.

It is found in the host cytoplasm. May subvert the host innate immune response by interacting with host IL1B and interfering with its function. The sequence is that of Protein L83L from Ornithodoros (relapsing fever ticks).